The following is a 256-amino-acid chain: Alcohol dehydrogenase (256 aa).

Residue 12–35 (FVAGLGGIGLDTSKELVKRDLKNL) coordinates NAD(+). Ser140 contacts substrate. Tyr153 acts as the Proton acceptor in catalysis.

It belongs to the short-chain dehydrogenases/reductases (SDR) family. In terms of assembly, homodimer.

The catalysed reaction is a primary alcohol + NAD(+) = an aldehyde + NADH + H(+). It catalyses the reaction a secondary alcohol + NAD(+) = a ketone + NADH + H(+). This chain is Alcohol dehydrogenase (Adh), found in Drosophila yakuba (Fruit fly).